The chain runs to 358 residues: Vanillin synthase (358 aa).

The first 21 residues, 1–21 (MARLLLLLVGVLIACAAGARA), serve as a signal peptide directing secretion. Residues 22–140 (GSEFLAEDNP…RGNHKLTSAI (119 aa)) constitute a propeptide, activation peptide. The N-linked (GlcNAc...) asparagine glycan is linked to asparagine 125. 2 cysteine pairs are disulfide-bonded: cysteine 162/cysteine 205 and cysteine 196/cysteine 238. Cysteine 165 is a catalytic residue. An N-linked (GlcNAc...) asparagine glycan is attached at asparagine 254. A disulfide bond links cysteine 296 and cysteine 346. Active-site residues include histidine 305 and asparagine 325.

This sequence belongs to the peptidase C1 family.

It catalyses the reaction (E)-ferulate + H2O = vanillin + acetate. It carries out the reaction 4-O-beta-D-glucosyl-trans-ferulate + H2O = 4-O-beta-D-glucosyl-vanillin + acetate. It participates in aromatic compound metabolism; phenylpropanoid biosynthesis. Functionally, involved in the biosynthesis of vanillin and derivative natural products. Catalyzes the double carbon bond cleavage of ferulic acid to vanillin and of respective glucosides. The chain is Vanillin synthase from Glechoma hederacea (Ground-ivy).